A 605-amino-acid polypeptide reads, in one-letter code: Kelch-like protein 26 (605 aa).

The region spanning 53 to 120 is the BTB domain; sequence LDVVLAIDNE…AYSSEVTLDL (68 aa). A BACK domain is found at 155 to 256; the sequence is CLNIGQMATT…RSSELVDSVQ (102 aa). Kelch repeat units follow at residues 300 to 351, 352 to 403, 404 to 450, 452 to 498, 499 to 549, and 551 to 598; these read SLIT…VLDN, FVYV…VLDG, QLYA…TCGD, LYIS…SANN, RIYA…LLDK, and IYIV…PIIL.

In terms of biological role, may play a role in endo(sarco)plasmic reticulum (ER/SR) mitochondrial signaling. May be part of the ubiquitin-proteasome system (UPS) and affect ubiquitination and degradation of target substrates. This Danio rerio (Zebrafish) protein is Kelch-like protein 26 (klhl26).